Here is a 357-residue protein sequence, read N- to C-terminus: tRNA-specific 2-thiouridylase MnmA (357 aa).

ATP is bound by residues alanine 6–serine 13 and leucine 32. Cysteine 101 serves as the catalytic Nucleophile. Residues cysteine 101 and cysteine 193 are joined by a disulfide bond. Glycine 125 is an ATP binding site. The segment at lysine 143–glutamine 145 is interaction with tRNA. Cysteine 193 (cysteine persulfide intermediate) is an active-site residue.

Belongs to the MnmA/TRMU family.

It localises to the cytoplasm. It catalyses the reaction S-sulfanyl-L-cysteinyl-[protein] + uridine(34) in tRNA + AH2 + ATP = 2-thiouridine(34) in tRNA + L-cysteinyl-[protein] + A + AMP + diphosphate + H(+). Functionally, catalyzes the 2-thiolation of uridine at the wobble position (U34) of tRNA, leading to the formation of s(2)U34. The polypeptide is tRNA-specific 2-thiouridylase MnmA (Mycolicibacterium vanbaalenii (strain DSM 7251 / JCM 13017 / BCRC 16820 / KCTC 9966 / NRRL B-24157 / PYR-1) (Mycobacterium vanbaalenii)).